Here is a 126-residue protein sequence, read N- to C-terminus: Aspartate 1-decarboxylase (126 aa).

Residue Ser-25 is the Schiff-base intermediate with substrate; via pyruvic acid of the active site. Pyruvic acid (Ser) is present on Ser-25. Position 57 (Thr-57) interacts with substrate. Tyr-58 serves as the catalytic Proton donor. 73–75 (GAA) contributes to the substrate binding site.

This sequence belongs to the PanD family. Heterooctamer of four alpha and four beta subunits. It depends on pyruvate as a cofactor. In terms of processing, is synthesized initially as an inactive proenzyme, which is activated by self-cleavage at a specific serine bond to produce a beta-subunit with a hydroxyl group at its C-terminus and an alpha-subunit with a pyruvoyl group at its N-terminus.

It is found in the cytoplasm. The catalysed reaction is L-aspartate + H(+) = beta-alanine + CO2. It functions in the pathway cofactor biosynthesis; (R)-pantothenate biosynthesis; beta-alanine from L-aspartate: step 1/1. Catalyzes the pyruvoyl-dependent decarboxylation of aspartate to produce beta-alanine. The sequence is that of Aspartate 1-decarboxylase from Nitrosococcus oceani (strain ATCC 19707 / BCRC 17464 / JCM 30415 / NCIMB 11848 / C-107).